Here is a 512-residue protein sequence, read N- to C-terminus: Glycerol kinase, glycosomal (512 aa).

Position 11 (T11) interacts with substrate. Residue R15 coordinates ATP. Residues R84, Y139, and D254 each contribute to the substrate site. ATP is bound by residues T276, G321, and 422-426 (GLSKN). Positions 510-512 (AKL) match the Microbody targeting signal motif.

The protein belongs to the FGGY kinase family.

The protein localises to the glycosome. The catalysed reaction is glycerol + ATP = sn-glycerol 3-phosphate + ADP + H(+). The protein operates within polyol metabolism; glycerol degradation via glycerol kinase pathway; sn-glycerol 3-phosphate from glycerol: step 1/1. In terms of biological role, catalyzes the phosphorylation of glycerol using ATP. Under anoxic conditions, when glycerol 3-phosphate accumulates in the glycosome, it catalyzes the reverse reaction, maintaining the ATP balance. Key enzyme for the survival of bloodstream forms under anoxic conditions. This Trypanosoma brucei brucei protein is Glycerol kinase, glycosomal (GK).